Consider the following 632-residue polypeptide: Dihydrolipoyllysine-residue acetyltransferase component of pyruvate dehydrogenase complex, mitochondrial (632 aa).

The N-terminal 77 residues, 1 to 77 (MWRVCARRVQ…LLGSPSRRSY (77 aa)), are a transit peptide targeting the mitochondrion. Lipoyl-binding domains follow at residues 82-158 (HQKV…CITV) and 208-284 (HMQI…CIIV). The residue at position 91 (Ser91) is a Phosphoserine. N6-lipoyllysine is present on residues Lys123 and Lys249. Residues 342–379 (FVSPLAKKLAAEKGIDLTQVKGTGPEGRIIKKDIDSFV) form the Peripheral subunit-binding (PSBD) domain. Residue Arg446 coordinates CoA. Lys451 carries the N6-acetyllysine modification. Lys458 is modified (N6-succinyllysine). Ser460 is a binding site for CoA. Lys532 is modified (N6-succinyllysine). 3 residues coordinate CoA: Ser551, Asn552, and Gly576. Residues His605 and Asp609 contribute to the active site.

It belongs to the 2-oxoacid dehydrogenase family. Part of the pyruvate dehydrogenase complex (PDHc) that is a multi-enzyme complex composed of multiple copies of three enzymes, pyruvate dehydrogenase (subunits PDH1A and PDHB, E1 component), dihydrolipoamide acetyltransferase (DLAT, E2 component), and dihydrolipoamide dehydrogenase (DLD, E3 component) to which is added an additional protein the E3-binding protein (PDHX, E3BP). In terms of structural architecture, the E2 and E3BP components assemble into a 60meric central core with icosahedral symmetry. The central core is decorated with E1 and E3 proteins. Currently, two alternative models for the E2:E3BP stoichiometry are considered as being either 48:12 (E2(48)-E3BP(12)) or 40:20 (E2(40)-E3BP(20)). Interacts with PDK2 and PDK3. Interacts with SIRT4. Interacts with PDHB. It depends on (R)-lipoate as a cofactor. In terms of processing, delipoylated at Lys-123 and Lys-249 by SIRT4, delipoylation decreases the PHD complex activity. In terms of tissue distribution, expressed in flagella of epididymal sperm.

Its subcellular location is the mitochondrion matrix. It carries out the reaction N(6)-[(R)-dihydrolipoyl]-L-lysyl-[protein] + acetyl-CoA = N(6)-[(R)-S(8)-acetyldihydrolipoyl]-L-lysyl-[protein] + CoA. Its function is as follows. As part of the pyruvate dehydrogenase complex, catalyzes the transfers of an acetyl group to a lipoic acid moiety. The pyruvate dehydrogenase complex, catalyzes the overall conversion of pyruvate to acetyl-CoA and CO(2), and thereby links cytoplasmic glycolysis and the mitochondrial tricarboxylic acid (TCA) cycle. The sequence is that of Dihydrolipoyllysine-residue acetyltransferase component of pyruvate dehydrogenase complex, mitochondrial from Rattus norvegicus (Rat).